The primary structure comprises 226 residues: uncharacterized protein (226 aa).

The protein to L.innocua lin2408 and lin2600.

This is an uncharacterized protein from Listeria innocua serovar 6a (strain ATCC BAA-680 / CLIP 11262).